The primary structure comprises 256 residues: Calsenilin (256 aa).

The segment at 1-22 (MQRTKEAMKASDGSLLGDPGRI) is disordered. Position 14 is a phosphoserine (Ser-14). Residue Lys-26 forms a Glycyl lysine isopeptide (Lys-Gly) (interchain with G-Cter in SUMO1) linkage. 2 S-palmitoyl cysteine lipidation sites follow: Cys-45 and Cys-46. Phosphoserine occurs at positions 60 and 63. Positions 67–123 (LELSTVRHQPEGLDQLQAQTKFTKKELQSLYRGFKNECPTGLVDEDTFKLIYSQFFP) constitute an EF-hand 1; degenerate domain. Lys-90 participates in a covalent cross-link: Glycyl lysine isopeptide (Lys-Gly) (interchain with G-Cter in SUMO1). EF-hand domains follow at residues 126–161 (DATTYAHFLFNAFDADGNGAIHFEDFVVGLSILLRG), 162–197 (TVHEKLKWAFNLYDINKDGYITKEEMLAIMKSIYDM), and 210–245 (APLEHVERFFQKMDRNQDGVVTIDEFLETCQKDENI). Asp-175, Asn-177, Asp-179, Tyr-181, Glu-186, Asp-223, Asn-225, Asp-227, and Glu-234 together coordinate Ca(2+). The segment at 243-256 (ENIMSSMQLFENVI) is interaction with KCND2.

The protein belongs to the recoverin family. As to quaternary structure, binds to DNA as a homomultimer. Dimerization is induced by binding to calcium. Interacts with the C-terminus of PSEN1 and PSEN2 and with PSEN2 CTF subunit. Associates with KCN1. Component of heteromultimeric potassium channels. Identified in potassium channel complexes containing KCND1, KCND2, KCND3, KCNIP1, KCNIP2, KCNIP3, KCNIP4, DPP6 and DPP10. Interacts with KCND2 and KCND3. Post-translationally, palmitoylated. Palmitoylation enhances association with the plasma membrane. Proteolytically cleaved by caspase-3. As to expression, detected in brain cortex, thalamus, dentate gyrus and cerebellum (at protein level). Expressed in brain. Colocalizes with KCND2 in excitatory neurons including cortical and hippocampal CA1 pyramidal cells.

It is found in the cytoplasm. It localises to the cell membrane. Its subcellular location is the endoplasmic reticulum. The protein resides in the golgi apparatus. The protein localises to the nucleus. In terms of biological role, calcium-dependent transcriptional repressor that binds to the DRE element of genes including PDYN and FOS. Affinity for DNA is reduced upon binding to calcium and enhanced by binding to magnesium. Seems to be involved in nociception. Functionally, regulatory subunit of Kv4/D (Shal)-type voltage-gated rapidly inactivating A-type potassium channels, such as KCND2/Kv4.2 and KCND3/Kv4.3. Modulates channel expression at the cell membrane, gating characteristics, inactivation kinetics and rate of recovery from inactivation in a calcium-dependent and isoform-specific manner. Its function is as follows. May play a role in the regulation of PSEN2 proteolytic processing and apoptosis. Together with PSEN2 involved in modulation of amyloid-beta formation. The sequence is that of Calsenilin (Kcnip3) from Rattus norvegicus (Rat).